The primary structure comprises 177 residues: Bifunctional protein PyrR (177 aa).

Residues 42–43 (SR), 104–112 (DDVLYTGRT), and Arg-137 contribute to the substrate site. Residues 100 to 112 (VVIVDDVLYTGRT) carry the PRPP-binding motif.

The protein belongs to the purine/pyrimidine phosphoribosyltransferase family. PyrR subfamily.

It catalyses the reaction UMP + diphosphate = 5-phospho-alpha-D-ribose 1-diphosphate + uracil. In terms of biological role, regulates the transcription of the pyrimidine nucleotide (pyr) operon in response to exogenous pyrimidines. Its function is as follows. Also displays a weak uracil phosphoribosyltransferase activity which is not physiologically significant. The chain is Bifunctional protein PyrR from Fusobacterium nucleatum subsp. nucleatum (strain ATCC 25586 / DSM 15643 / BCRC 10681 / CIP 101130 / JCM 8532 / KCTC 2640 / LMG 13131 / VPI 4355).